Here is a 270-residue protein sequence, read N- to C-terminus: Glucan endo-1,3-beta-glucosidase (270 aa).

A signal peptide spans 1 to 18; the sequence is MNAFTFPLLLAFCAFAHG. Positions 22–270 constitute a GH16 domain; sequence LDWEDEFNGG…VEYVKKWTWN (249 aa). The active-site Nucleophile is Glu-137. Catalysis depends on Glu-142, which acts as the Proton donor.

Belongs to the glycosyl hydrolase 16 family.

It is found in the secreted. It carries out the reaction Hydrolysis of (1-&gt;3)-beta-D-glucosidic linkages in (1-&gt;3)-beta-D-glucans.. With respect to regulation, ca(2+) does not affect the enzyme activity nor the thermostability. Other cations, such as Mg(2+), Mn(2+), Cu(2+), Zn(2+), Ag(+) or Hg(2+) do not cause any serious adverse effect on the activity. Also no significant change in the activity in response to the addition of 1 mM EDTA. Functionally, hydrolyzes laminarin majorily to glucose (G1), laminaribiose (L2), laminaritriose (L3), laminaritetraose (L4) and laminaripentaose (L5). Hydrolyzes laminarioligosaccharides L3, L4, L5 and laminarihexaose (L6) to G1, L2 and L3. Hardly hydrolyzes L2. Does not hydrolyze lichenan, pustulan, carboxymethyl cellulose, locust bean gum or soluble starch. This Cryptopygus antarcticus (Antarctic springtail) protein is Glucan endo-1,3-beta-glucosidase.